The sequence spans 1025 residues: Multidrug resistance protein MdtC (1025 aa).

12 consecutive transmembrane segments (helical) span residues 3-23, 333-353, 360-380, 387-407, 431-451, 463-483, 528-548, 853-873, 875-895, 897-917, 953-973, and 984-1004; these read FFAL…AITL, EVEQ…FLFL, IIPA…MYLC, LSLM…IVVL, VGFT…PLLL, FAVT…TLTP, LVGV…ISIP, VILI…LYES, VHPL…LLAL, LFNA…IGIV, PIMM…LSGG, and ITIV…TPVV.

The protein belongs to the resistance-nodulation-cell division (RND) (TC 2.A.6) family. MdtC subfamily. As to quaternary structure, part of a tripartite efflux system composed of MdtA, MdtB and MdtC. MdtC forms a heteromultimer with MdtB.

The protein resides in the cell inner membrane. Functionally, the MdtABC tripartite complex confers resistance against novobiocin and deoxycholate. This is Multidrug resistance protein MdtC from Escherichia coli O127:H6 (strain E2348/69 / EPEC).